The primary structure comprises 316 residues: Altered inheritance of mitochondria protein 18, mitochondrial (316 aa).

The transit peptide at 1 to 41 (MFGRVFNRSSPIIRLSVRTITSLNGARASVNRPLAKTLISN) directs the protein to the mitochondrion.

It belongs to the AIM18/AIM46 family.

The protein resides in the mitochondrion. The polypeptide is Altered inheritance of mitochondria protein 18, mitochondrial (AIM18) (Vanderwaltozyma polyspora (strain ATCC 22028 / DSM 70294 / BCRC 21397 / CBS 2163 / NBRC 10782 / NRRL Y-8283 / UCD 57-17) (Kluyveromyces polysporus)).